The sequence spans 1425 residues: MHPSNPKVRSSPSGNTQSSPKSKQEVMVRPPTVMSPSGNPQLDSKFSNQGKPGGSASQSQPSPCDSKSGGHTPKALPGPGGSMGLKNGAGNGAKGKGKRERSISADSFDQRDPGTPNDDSDIKECNSADHIKSQESQHTPHSMTPSTATAPRSSTPSHGQTPAPEPISAQKTPAKVVYVFSTEMANKAAEAVLKGQVETIVSFHIQNISNSKSERSTAPLNTQIPTLRNDPKPLPQQPPAPANQDQNSSQNARLQPTPPIQAPAPKPTAAPRPLDRESPGVENKLIPPVGSPGSSTPLPPDGTGPNSTPNNRAVTPVSQGSNSSSADPKAPPPPPVSGGEPPTLGENPDGLSQEQLEHRERSLQTLRDIQRMLFPDEKEFTAGQTGGPQQNTGVLDGPQKKPDGPIQAMMSQSQSLGKGPGPRTDVGAPFGPQGHRDVPFSPDEMVPPNMSSQSGPIGPDHLDHMTPEQIAWLKLQQEFYEEKRRKQEQVVVQQCSLQDMMVHQHGPRGVVRGPPPPYQMAPGEGWAPGAEPFPDGINISHSLPPRGMAPHPNMPGSQMRLPGFAGMINSEMEGPNVPNPASRPGLSGVSWPDDVPKIPDGRNFPPGQGVFSGPGRGERFPNPQGLSEEMFQQQLAEKQLALPPGMSMEGIRPGMEMNRMIPGSQRHMEPGSNPIFPRIPVEGPLSPSRGDFPKGMPPQIGPGRELEFGMVPGGMKGEVNLNVNMGSSSQMIPQKMREAGAGPEEMMKLRPGSSEMLPAQQKMVPLPFGEHPQQEYGVGPRPFLPMSQGPGSNSGLRNLREPIGPDQRTNSRLSHMPPLPLNPSSNPTSLSTAPPVQRGLGRKPLDISVAGSQVHSPGINPLKSPTMHQVQSPMLGSPSGNLKSPQTPSQLAGMLAGPAAAASIKSPPVLGSAAASPVHLKSPSLPAPSPGWTSSPKPPLQSPGIPPNHKAPLTMASPAMLGSVESGGPPPPTASQPASVNIPGSLPSSTPYPMPPEPTLSQNPLSIMMSRMSKFAMPSSTPLYHDAIKTVASSDDDSPPARSPNLPSMNSMPGMGINTQNPRISGPNPVVPMPTLSPMGMTQPLSHSNQMPSPNAMGPSIPPHGVPMGPGLMSHNPIMGHGSQEPPMVPQGRMGFPQGFPPVQSPPQQVPFPHNGPTGGQGNFPGGIGFPGEGPLGRPSNLPQSSADPALCKPGGPGAPDSFTVLGNSMPSVFTDPDLQEVIRPGATGIPEFDLSRIIPSEKPSQTLQYFPRGEVPGRKQPQGPGPGFSHMQGMMSDQAPRMGLALPGMGGPGPVGTPDIPLGTSPSMPGHNPMRPPAFLQQGMMGPHHRMMSPAQSTVPGPATLMTNPAAAVGMIPGKDRGPAGLYTHPGPVGSPGMMMSMQGMMGPQQNIMIPPQMRPRGMAADVGMGGFSQGPGNPGNMMF.

Residues 1 to 172 (MHPSNPKVRS…APEPISAQKT (172 aa)) are disordered. Composition is skewed to polar residues over residues 7-21 (KVRS…SSPK) and 34-48 (MSPS…KFSN). Residues 54 to 63 (GSASQSQPSP) are compositionally biased toward low complexity. A compositionally biased stretch (gly residues) spans 78 to 94 (GPGGSMGLKNGAGNGAK). Composition is skewed to basic and acidic residues over residues 100 to 112 (ERSI…DQRD) and 120 to 135 (SDIK…KSQE). Residue serine 104 is modified to Phosphoserine. Low complexity predominate over residues 144 to 157 (TPSTATAPRSSTPS). At serine 157 the chain carries Phosphoserine. At threonine 172 the chain carries Phosphothreonine. An interaction with PYGO1 region spans residues 177–205 (VYVFSTEMANKAAEAVLKGQVETIVSFHI). Residues 207–226 (NISNSKSERSTAPLNTQIPT) are compositionally biased toward polar residues. Disordered stretches follow at residues 207–441 (NISN…VPFS) and 577–624 (VPNP…PNPQ). 2 stretches are compositionally biased toward pro residues: residues 232 to 241 (KPLPQQPPAP) and 256 to 270 (PTPP…PTAA). A compositionally biased stretch (polar residues) spans 304–320 (GPNSTPNNRAVTPVSQG). Threonine 315 carries the phosphothreonine modification. A phosphoserine mark is found at serine 318 and serine 352. The segment covering 355–380 (QLEHRERSLQTLRDIQRMLFPDEKEF) has biased composition (basic and acidic residues). The interval 358–374 (HRERSLQTLRDIQRMLF) is interaction with CTNNB1. Phosphoserine occurs at positions 686 and 688. 4 disordered regions span residues 781–1003 (RPFL…LSQN), 1031–1051 (VASS…SMNS), 1153–1199 (PHNG…GPGA), and 1252–1275 (PRGE…MQGM). Arginine 800 carries the post-translational modification Asymmetric dimethylarginine. Residues 822 to 835 (NPSSNPTSLSTAPP) show a composition bias toward low complexity. N6-acetyllysine is present on lysine 843. Residues 866 to 890 (TMHQVQSPMLGSPSGNLKSPQTPSQ) are compositionally biased toward polar residues. The segment covering 891-902 (LAGMLAGPAAAA) has biased composition (low complexity). Serine 906 and serine 916 each carry phosphoserine. The segment covering 936-946 (PKPPLQSPGIP) has biased composition (pro residues). The span at 1157-1175 (PTGGQGNFPGGIGFPGEGP) shows a compositional bias: gly residues.

This sequence belongs to the BCL9 family. In terms of assembly, binds to beta-catenin (CTNNB1), PYGO1 and PYGO2; the interaction with PYGO1 increases PYGO1 affinity to histone H3 methylated at 'Lys 4'.

It localises to the nucleus. Its function is as follows. Promotes beta-catenin's transcriptional activity. Involved in signal transduction through the Wnt pathway. The chain is B-cell CLL/lymphoma 9 protein (Bcl9) from Mus musculus (Mouse).